A 512-amino-acid polypeptide reads, in one-letter code: Probable cytosol aminopeptidase (512 aa).

Residues Lys-284 and Asp-289 each coordinate Mn(2+). Lys-296 is a catalytic residue. Residues Asp-307, Asp-366, and Glu-368 each contribute to the Mn(2+) site. Arg-370 is an active-site residue.

The protein belongs to the peptidase M17 family. The cofactor is Mn(2+).

The protein resides in the cytoplasm. It catalyses the reaction Release of an N-terminal amino acid, Xaa-|-Yaa-, in which Xaa is preferably Leu, but may be other amino acids including Pro although not Arg or Lys, and Yaa may be Pro. Amino acid amides and methyl esters are also readily hydrolyzed, but rates on arylamides are exceedingly low.. The catalysed reaction is Release of an N-terminal amino acid, preferentially leucine, but not glutamic or aspartic acids.. Presumably involved in the processing and regular turnover of intracellular proteins. Catalyzes the removal of unsubstituted N-terminal amino acids from various peptides. This chain is Probable cytosol aminopeptidase, found in Cupriavidus necator (strain ATCC 17699 / DSM 428 / KCTC 22496 / NCIMB 10442 / H16 / Stanier 337) (Ralstonia eutropha).